We begin with the raw amino-acid sequence, 282 residues long: Biotin synthase (282 aa).

In terms of domain architecture, Radical SAM core spans 1 to 230 (MSDNKIYLCA…NQMLMIAGGR (230 aa)). The [4Fe-4S] cluster site is built by Cys19, Cys23, and Cys26. Residues Cys63, Cys98, and Cys156 each contribute to the [2Fe-2S] cluster site.

Belongs to the radical SAM superfamily. Biotin synthase family. Homodimer. Requires [4Fe-4S] cluster as cofactor. It depends on [2Fe-2S] cluster as a cofactor.

The catalysed reaction is (4R,5S)-dethiobiotin + (sulfur carrier)-SH + 2 reduced [2Fe-2S]-[ferredoxin] + 2 S-adenosyl-L-methionine = (sulfur carrier)-H + biotin + 2 5'-deoxyadenosine + 2 L-methionine + 2 oxidized [2Fe-2S]-[ferredoxin]. It participates in cofactor biosynthesis; biotin biosynthesis; biotin from 7,8-diaminononanoate: step 2/2. Functionally, catalyzes the conversion of dethiobiotin (DTB) to biotin by the insertion of a sulfur atom into dethiobiotin via a radical-based mechanism. In Aliarcobacter butzleri (strain RM4018) (Arcobacter butzleri), this protein is Biotin synthase.